A 196-amino-acid polypeptide reads, in one-letter code: MSEVNEETLRAREALAGHYKEVLGLLGEDVEREGLLKTPERVAKAMQFLTKGYHEDPEAVLRSAMFQEEDYKQMVIVKDIDFFSLCEHHMLPFFGKAHVAYIPKKYITGLSKIPRVVDIFARRLQIQERMTMQIKDCIQRTLDPLGVMVVIEAQHMCMQMRGVEKQNSLTTTSDFTGFFQQAKTREEFMNLIKHNR.

Zn(2+) is bound by residues Cys-86, His-89, and Cys-157.

It belongs to the GTP cyclohydrolase I family. In terms of assembly, toroid-shaped homodecamer, composed of two pentamers of five dimers.

It catalyses the reaction GTP + H2O = 7,8-dihydroneopterin 3'-triphosphate + formate + H(+). It functions in the pathway cofactor biosynthesis; 7,8-dihydroneopterin triphosphate biosynthesis; 7,8-dihydroneopterin triphosphate from GTP: step 1/1. The chain is GTP cyclohydrolase 1 from Parabacteroides distasonis (strain ATCC 8503 / DSM 20701 / CIP 104284 / JCM 5825 / NCTC 11152).